A 401-amino-acid polypeptide reads, in one-letter code: Nodal homolog 3-B (401 aa).

Residues 1 to 18 (MALLNLFFCLVFSSPLMA) form the signal peptide. A propeptide spanning residues 19–274 (MPPVLQGRKS…KVNGFRRLRR (256 aa)) is cleaved from the precursor. Residues Asn-168, Asn-337, Asn-341, and Asn-344 are each glycosylated (N-linked (GlcNAc...) asparagine). 2 cysteine pairs are disulfide-bonded: Cys-299–Cys-365 and Cys-328–Cys-396.

Belongs to the TGF-beta family. In terms of assembly, monomer. The propeptide region interacts with bmp4 in a non-covalent manner. In terms of tissue distribution, expressed in the dorsal marginal region of late blastula, becoming restricted to the dorsal blastopore lip (Spemann organizer) at the early gastrula stage.

It is found in the secreted. In terms of biological role, exhibits mesoderm-dorsalizing activity and neural-inducing activity, but lacks mesoderm-inducing activity. Regulates the expression of specific mesodermal and neural genes. Induces convergent extension movements at the embryonic midline by activating the fgf signaling pathway to induce t/bra expression in the organizer region. Acts with wnt11 to induce Spemann organizer cells and induce axis formation. The unprocessed protein antagonizes bmp-signaling. This chain is Nodal homolog 3-B (nodal3-b), found in Xenopus laevis (African clawed frog).